The chain runs to 292 residues: 4-hydroxybenzoate octaprenyltransferase (292 aa).

8 helical membrane-spanning segments follow: residues 23–43 (PIGIFLLLWPALWALWIAGEG), 47–67 (PGVAAVIVFGVVLMRAAGCVI), 98–118 (LILFMVLCLTAFALVLTMNWL), 141–161 (HLPQAYLGLAFGWAIPMTFAA), 164–184 (GSIPVVAWALYAATVLWALIY), 211–231 (YDREIIGALQIAMLAILAGIG), 233–253 (YLGLGGLYALGLAAAAGFSVY), and 270–290 (FLNNHWFGAAVFAGLFADYLW).

It belongs to the UbiA prenyltransferase family. Requires Mg(2+) as cofactor.

The protein localises to the cell inner membrane. The enzyme catalyses all-trans-octaprenyl diphosphate + 4-hydroxybenzoate = 4-hydroxy-3-(all-trans-octaprenyl)benzoate + diphosphate. It participates in cofactor biosynthesis; ubiquinone biosynthesis. Its function is as follows. Catalyzes the prenylation of para-hydroxybenzoate (PHB) with an all-trans polyprenyl group. Mediates the second step in the final reaction sequence of ubiquinone-8 (UQ-8) biosynthesis, which is the condensation of the polyisoprenoid side chain with PHB, generating the first membrane-bound Q intermediate 3-octaprenyl-4-hydroxybenzoate. This is 4-hydroxybenzoate octaprenyltransferase from Methylococcus capsulatus (strain ATCC 33009 / NCIMB 11132 / Bath).